The chain runs to 174 residues: Ribosome maturation factor RimM (174 aa).

The PRC barrel domain occupies 97 to 171; it reads SDGEYYWCDL…RMTVSLPEGL (75 aa).

Belongs to the RimM family. Binds ribosomal protein uS19.

It localises to the cytoplasm. An accessory protein needed during the final step in the assembly of 30S ribosomal subunit, possibly for assembly of the head region. Essential for efficient processing of 16S rRNA. May be needed both before and after RbfA during the maturation of 16S rRNA. It has affinity for free ribosomal 30S subunits but not for 70S ribosomes. The protein is Ribosome maturation factor RimM of Geotalea daltonii (strain DSM 22248 / JCM 15807 / FRC-32) (Geobacter daltonii).